Here is a 57-residue protein sequence, read N- to C-terminus: Large ribosomal subunit protein bL32 (57 aa).

Residues 1–19 are compositionally biased toward basic residues; it reads MATPKRRMSRANTRSRRSQ. A disordered region spans residues 1-21; that stretch reads MATPKRRMSRANTRSRRSQWK.

This sequence belongs to the bacterial ribosomal protein bL32 family.

The protein is Large ribosomal subunit protein bL32 of Mycobacterium ulcerans (strain Agy99).